The chain runs to 361 residues: MESTEDEFYTICLNLTAEDPSFGNCNYTTDFENGELLEKVVSRVVPIFFGFIGIVGLVGNALVVLVVAANPGMRSTTNLLIINLAVADLLFVIFCVPFTATDYVMPRWPFGDWWCKVVQYFIVVTAHASVYTLVLMSLDRFMAVVHPIASMSIRTEKNALLAIACIWVVILTTAIPVGICHGEREYSYFNRNHSSCVFLEERGYSKLGFQMSFFLSSYVIPLALISVLYMCMLTRLWKSAPGGRVSAESRRGRKKVTRMVVVVVVVFAVCWCPIQIILLVKALNKYHITYFTVTAQIVSHVLAYMNSCVNPVLYAFLSENFRVAFRKVMYCPPPYNDGFSGRPQATKTTRTGNGNSCHDIV.

Over 1-46 (MESTEDEFYTICLNLTAEDPSFGNCNYTTDFENGELLEKVVSRVVP) the chain is Extracellular. Residues Asn14 and Asn26 are each glycosylated (N-linked (GlcNAc...) asparagine). Residues 47–67 (IFFGFIGIVGLVGNALVVLVV) traverse the membrane as a helical segment. Residues 68–78 (AANPGMRSTTN) lie on the Cytoplasmic side of the membrane. A helical membrane pass occupies residues 79 to 99 (LLIINLAVADLLFVIFCVPFT). Residues 100-116 (ATDYVMPRWPFGDWWCK) are Extracellular-facing. Cys115 and Cys196 are oxidised to a cystine. Residues 117-137 (VVQYFIVVTAHASVYTLVLMS) form a helical membrane-spanning segment. Residues 138-158 (LDRFMAVVHPIASMSIRTEKN) are Cytoplasmic-facing. A helical transmembrane segment spans residues 159-179 (ALLAIACIWVVILTTAIPVGI). Residues 180–212 (CHGEREYSYFNRNHSSCVFLEERGYSKLGFQMS) are Extracellular-facing. The N-linked (GlcNAc...) asparagine glycan is linked to Asn192. Residues 213-233 (FFLSSYVIPLALISVLYMCML) traverse the membrane as a helical segment. Residues 234 to 259 (TRLWKSAPGGRVSAESRRGRKKVTRM) lie on the Cytoplasmic side of the membrane. The helical transmembrane segment at 260-280 (VVVVVVVFAVCWCPIQIILLV) threads the bilayer. At 281–296 (KALNKYHITYFTVTAQ) the chain is on the extracellular side. Residues 297–317 (IVSHVLAYMNSCVNPVLYAFL) traverse the membrane as a helical segment. Topologically, residues 318–361 (SENFRVAFRKVMYCPPPYNDGFSGRPQATKTTRTGNGNSCHDIV) are cytoplasmic. A disordered region spans residues 341 to 361 (GRPQATKTTRTGNGNSCHDIV). Polar residues predominate over residues 343-361 (PQATKTTRTGNGNSCHDIV).

It belongs to the G-protein coupled receptor 1 family. In terms of tissue distribution, expressed in the midgut and, to a lesser extent, in the fore- and hindgut of fifth instar larvae. Also highly expressed in the brain of fourth and fifth instar larvae.

It is found in the cell membrane. In terms of biological role, acts as a receptor for A-type allatostatin neuropeptide hormones. The sequence is that of Allatostatin-A receptor from Bombyx mori (Silk moth).